A 610-amino-acid polypeptide reads, in one-letter code: Chitinase 63 (610 aa).

Positions 1–30 (MRFRHKAAALAATLALPLAGLVGLASPAQA) are cleaved as a signal peptide. The CBM2 domain occupies 31 to 134 (ATSATATFQK…KINGGSCDGS (104 aa)). 2 disordered regions span residues 125-153 (KING…ASNI) and 208-239 (ARDT…PNPG). Positions 144 to 229 (APGTPTASNI…GSVKVTTTGG (86 aa)) constitute a Fibronectin type-III domain. Polar residues predominate over residues 213-224 (DQTGPASGSVKV). In terms of domain architecture, GH18 spans 241–610 (EVKMGYFTNW…LVSAIDSGLK (370 aa)). Chitin is bound by residues 313–314 (DQ) and 340–343 (GGWT). Residue Glu383 is the Proton donor of the active site. Chitin-binding positions include Tyr384, 450 to 453 (MTYD), and Trp590.

Belongs to the glycosyl hydrolase 18 family. Chitinase class II subfamily.

The enzyme catalyses Random endo-hydrolysis of N-acetyl-beta-D-glucosaminide (1-&gt;4)-beta-linkages in chitin and chitodextrins.. This Streptomyces plicatus protein is Chitinase 63 (chtA).